The primary structure comprises 387 residues: MATKKKTNFDDITKKYGAERDKALADALALIEKDFGKGSLMRLGEAANQKVSVVSSGSLALDIALGAGGYPKGRIVEIYGPESSGKTTVALHAVAAVQKEGGIAAFIDAENALDPEYAKALGVNIDELLLSQPDYGEQGLQIAEKLITSGAVDLVVIDSVAALVPKAEIDGEIGDSSVGLQARMMSQAMRKLAGHINKTKTTAIFINQLREKVGVMFGSPETTPGGRALKFYASVRLDVRGSTKIEEGSGDNKTQIGKITKIKVVKNKVAPPFKVALVDIMFGEGISSTGELLNIAVEEGIIKKSGAWFAYNDEKIGQGAEKAKNYLKEHQDVFDEIDHKVRAAHGLLDDSEVAETEEETTASKTKAKAKKEEKXVETEEIELELQD.

80-87 lines the ATP pocket; that stretch reads GPESSGKT. Residues 348–387 form a disordered region; sequence LDDSEVAETEEETTASKTKAKAKKEEKXVETEEIELELQD. 2 stretches are compositionally biased toward acidic residues: residues 349–360 and 378–387; these read DDSEVAETEEET and TEEIELELQD.

Belongs to the RecA family.

The protein localises to the cytoplasm. In terms of biological role, can catalyze the hydrolysis of ATP in the presence of single-stranded DNA, the ATP-dependent uptake of single-stranded DNA by duplex DNA, and the ATP-dependent hybridization of homologous single-stranded DNAs. It interacts with LexA causing its activation and leading to its autocatalytic cleavage. The sequence is that of Protein RecA from Lactococcus lactis subsp. cremoris (Streptococcus cremoris).